The chain runs to 132 residues: Small heat shock protein hspL (132 aa).

A sHSP domain is found at 15–131; the sequence is TFTNFVSAPV…VKMSNNNKVE (117 aa).

This sequence belongs to the small heat shock protein (HSP20) family.

This chain is Small heat shock protein hspL (hspL), found in Dictyostelium discoideum (Social amoeba).